We begin with the raw amino-acid sequence, 232 residues long: Ubiquinone biosynthesis O-methyltransferase (232 aa).

Residues arginine 36, glycine 55, aspartate 76, and leucine 120 each contribute to the S-adenosyl-L-methionine site.

This sequence belongs to the methyltransferase superfamily. UbiG/COQ3 family.

It catalyses the reaction a 3-demethylubiquinol + S-adenosyl-L-methionine = a ubiquinol + S-adenosyl-L-homocysteine + H(+). It carries out the reaction a 3-(all-trans-polyprenyl)benzene-1,2-diol + S-adenosyl-L-methionine = a 2-methoxy-6-(all-trans-polyprenyl)phenol + S-adenosyl-L-homocysteine + H(+). It functions in the pathway cofactor biosynthesis; ubiquinone biosynthesis. Functionally, O-methyltransferase that catalyzes the 2 O-methylation steps in the ubiquinone biosynthetic pathway. The protein is Ubiquinone biosynthesis O-methyltransferase of Pseudomonas fluorescens (strain ATCC BAA-477 / NRRL B-23932 / Pf-5).